We begin with the raw amino-acid sequence, 65 residues long: MVSVQINDNESIDKMLKRFKKKYERAGVLKEFRKKAYFVKPSVDGRLKRSRSRRRAQRANEERNS.

The tract at residues 45-65 (GRLKRSRSRRRAQRANEERNS) is disordered. A compositionally biased stretch (basic residues) spans 48 to 57 (KRSRSRRRAQ).

It belongs to the bacterial ribosomal protein bS21 family.

This Chlorobium phaeobacteroides (strain DSM 266 / SMG 266 / 2430) protein is Small ribosomal subunit protein bS21.